Here is a 66-residue protein sequence, read N- to C-terminus: Large ribosomal subunit protein bL35 (66 aa).

The span at 1 to 16 (MPKQKTHRASAKRFKR) shows a compositional bias: basic residues. Residues 1–21 (MPKQKTHRASAKRFKRTGSGG) form a disordered region.

This sequence belongs to the bacterial ribosomal protein bL35 family.

The sequence is that of Large ribosomal subunit protein bL35 from Streptococcus agalactiae serotype Ia (strain ATCC 27591 / A909 / CDC SS700).